A 315-amino-acid chain; its full sequence is p-hydroxyphenylacetate 3-hydroxylase, reductase component (315 aa).

The protein belongs to the non-flavoprotein flavin reductase family. Homodimer. The p-hydroxyphenylacetate 3-hydroxylase (HpaH) is composed of an oxygenase component C2 and a reductase component C1.

The catalysed reaction is a reduced flavin + NAD(+) = an oxidized flavin + NADH + 2 H(+). It functions in the pathway aromatic compound metabolism; 4-hydroxyphenylacetate degradation; pyruvate and succinate semialdehyde from 4-hydroxyphenylacetate: step 1/7. With respect to regulation, flavin concentrations greater than 15 uM do not inhibit the NADH oxidation activity of the reductase component C1 but do affect the hydroxylation activity of the C1-C2 complex. Maximal reductase activity is achieved only upon HPA binding to the reductase component C1 before interaction with NADH. HPA stimulates the rates of both the reduction of FMN and release of reduced FMN from the reductase component. Its function is as follows. Reductase component of a two-component system that supplies reduced FMN (FMNH2) to the oxygenase component to catalyze the hydroxylation of 4-hydroxyphenylacetic acid, leading to the production of 3,4-dihydroxyphenylacetate (3,4-DHPA). Catalyzes the reduction of free flavins (FMN, FAD and riboflavin) by NADH. Subsequently, the reduced flavins diffuse to the oxygenase component C2. This chain is p-hydroxyphenylacetate 3-hydroxylase, reductase component, found in Acinetobacter baumannii.